We begin with the raw amino-acid sequence, 686 residues long: Soluble guanylate cyclase gcy-34 (686 aa).

Position 105 (H105) interacts with heme. 2 coiled-coil regions span residues 306-335 and 398-432; these read KKHM…ELTQ and VEVN…LKDM. The Guanylate cyclase domain occupies 455–583; it reads TVMFCDLPAF…ETVTLASQME (129 aa). Mg(2+) is bound by residues D460 and D504.

Belongs to the adenylyl cyclase class-4/guanylyl cyclase family. Heterodimer; with other soluble guanylate cyclases. It depends on heme as a cofactor. As to expression, expressed in a small number of neurons, corresponding to URX, AQR and PQR neurons.

It localises to the cytoplasm. The catalysed reaction is GTP = 3',5'-cyclic GMP + diphosphate. With respect to regulation, may be regulated by molecular oxygen. Probably not activated by nitric oxide (NO). Its function is as follows. Synthesizes cyclic GMP (cGMP) from GTP. May be involved in sensitivity to quinine by regulating egl-4 activity through the production of cGMP. The polypeptide is Soluble guanylate cyclase gcy-34 (gcy-34) (Caenorhabditis elegans).